The sequence spans 204 residues: Double homeobox protein A (204 aa).

Residues 15 to 74 (HRRCRTKFTEEQLKILINTFNQKPYPGYATKQKLALEINTEESRIQIWFQNRRARHGFQK) constitute a DNA-binding region (homeobox 1). 2 disordered regions span residues 73–101 (QKRP…SREA) and 163–204 (EPVA…ARTW). Residues 81 to 90 (LESSQSQGQD) are compositionally biased toward polar residues. Positions 101–160 (ARRCRTTYSASQLHTLIKAFMKNPYPGIDSREELAKEIGVPESRVQIWFQNRRSRLLLQR) form a DNA-binding region, homeobox 2. The span at 184–197 (EDTQNGTNFTSDSH) shows a compositional bias: polar residues.

It belongs to the paired homeobox family. Expressed in embryonic stem cells.

The protein localises to the nucleus. In terms of biological role, transcription factor that acts as a repressor. In Homo sapiens (Human), this protein is Double homeobox protein A.